The primary structure comprises 606 residues: Sodium-independent sulfate anion transporter (606 aa).

Residues 1-51 lie on the Extracellular side of the membrane; the sequence is MPSSVTALGQARSSGPGMAPSACCCSPAALQRRLPILAWLPSYSLQWLKMD. Residues 52-72 form a helical membrane-spanning segment; that stretch reads FVAGLSVGLTAIPQALAYAEV. Alanine 73 is a topological domain (cytoplasmic). Residues 74-94 traverse the membrane as a helical segment; the sequence is GLPPQYGLYSAFMGCFVYFFL. Topologically, residues 95 to 100 are extracellular; sequence GTSRDV. A helical membrane pass occupies residues 101–117; it reads TLGPTAIMSLLVSFYTF. Residues 118 to 119 lie on the Cytoplasmic side of the membrane; the sequence is HE. Residues 120-140 form a helical membrane-spanning segment; the sequence is PAYAVLLAFLSGCIQLAMGVL. At 141–147 the chain is on the extracellular side; it reads RLGFLLD. The chain crosses the membrane as a helical span at residues 148–168; sequence FISYPVIKGFTSAAAVTIGFG. The Cytoplasmic segment spans residues 169–197; the sequence is QIKNLLGLQNIPRPFFLQVYHTFLRIAET. Residues 198–218 form a helical membrane-spanning segment; it reads RVGDAVLGLVCMLLLLVLKLM. Residues 219–250 are Extracellular-facing; the sequence is RDHVPPVHPEMPPGVRLSRGLVWAATTARNAL. Residues 251–271 traverse the membrane as a helical segment; it reads VVSFAALVAYSFEVTGYQPFI. Over 272–307 the chain is Cytoplasmic; it reads LTGETAEGLPPVRIPPFSVTTANGTISFTEMVQDMG. Residues 308–328 traverse the membrane as a helical segment; sequence AGLAVVPLMGLLESIAVAKAF. At 329–341 the chain is on the extracellular side; sequence ASQNNYRIDANQE. Residues 342–362 traverse the membrane as a helical segment; sequence LLAIGLTNMLGSLVSSYPVTG. At 363–374 the chain is on the cytoplasmic side; that stretch reads SFGRTAVNAQSG. The helical transmembrane segment at 375–395 threads the bilayer; that stretch reads VCTPAGGLVTGVLVLLSLDYL. The Extracellular portion of the chain corresponds to 396–398; it reads TSL. The helical transmembrane segment at 399–419 threads the bilayer; it reads FYYIPKSALAAVIIMAVAPLF. The Cytoplasmic portion of the chain corresponds to 420–441; it reads DTKIFRTLWRVKRLDLLPLCVT. The chain crosses the membrane as a helical span at residues 442 to 462; the sequence is FLLCFWEVQYGILAGALVSLL. At 463 to 606 the chain is on the extracellular side; it reads MLLHSAARPE…LDQKVALLKA (144 aa). The region spanning 470–584 is the STAS domain; that stretch reads RPETKVSEGP…EAEKHLRQEP (115 aa).

The protein belongs to the SLC26A/SulP transporter (TC 2.A.53) family. Detected in all tissues tested with highest expression observed in brain, kidney, HEVEC and placenta and lowest in pancreas, skeletal muscle, liver, lung and heart.

The protein resides in the cell membrane. It is found in the lysosome membrane. It localises to the apical cell membrane. Its subcellular location is the basolateral cell membrane. It catalyses the reaction hydrogencarbonate(in) + chloride(out) = hydrogencarbonate(out) + chloride(in). The enzyme catalyses sulfate(in) + H(+)(in) = sulfate(out) + H(+)(out). It carries out the reaction oxalate(in) + chloride(out) = oxalate(out) + chloride(in). Sodium-independent anion exchanger mediating bicarbonate, chloride, sulfate and oxalate transport. Exhibits sodium-independent sulfate anion transporter activity that may cooperate with SLC26A2 to mediate DIDS-sensitive sulfate uptake into high endothelial venules endothelial cells (HEVEC). In the kidney, mediates chloride-bicarbonate exchange, facilitating V-ATPase-mediated acid secretion. May function as a chloride channel, playing an important role in moderating chloride homeostasis and neuronal activity in the cerebellum. In Homo sapiens (Human), this protein is Sodium-independent sulfate anion transporter.